Reading from the N-terminus, the 192-residue chain is Orotate phosphoribosyltransferase 2 (192 aa).

Residue 116–124 participates in 5-phospho-alpha-D-ribose 1-diphosphate binding; sequence EDIVTTGLS. Thr120 and Arg148 together coordinate orotate.

This sequence belongs to the purine/pyrimidine phosphoribosyltransferase family. PyrE subfamily. As to quaternary structure, homodimer. Requires Mg(2+) as cofactor.

The enzyme catalyses orotidine 5'-phosphate + diphosphate = orotate + 5-phospho-alpha-D-ribose 1-diphosphate. Its pathway is pyrimidine metabolism; UMP biosynthesis via de novo pathway; UMP from orotate: step 1/2. Functionally, catalyzes the transfer of a ribosyl phosphate group from 5-phosphoribose 1-diphosphate to orotate, leading to the formation of orotidine monophosphate (OMP). The sequence is that of Orotate phosphoribosyltransferase 2 from Mesorhizobium japonicum (strain LMG 29417 / CECT 9101 / MAFF 303099) (Mesorhizobium loti (strain MAFF 303099)).